Here is a 356-residue protein sequence, read N- to C-terminus: Chorismate synthase (356 aa).

NADP(+) contacts are provided by arginine 48 and arginine 54. FMN is bound by residues 125-127 (RSS), 237-238 (NA), glycine 281, 296-300 (KPTSS), and arginine 322.

It belongs to the chorismate synthase family. As to quaternary structure, homotetramer. FMNH2 is required as a cofactor.

The enzyme catalyses 5-O-(1-carboxyvinyl)-3-phosphoshikimate = chorismate + phosphate. The protein operates within metabolic intermediate biosynthesis; chorismate biosynthesis; chorismate from D-erythrose 4-phosphate and phosphoenolpyruvate: step 7/7. Functionally, catalyzes the anti-1,4-elimination of the C-3 phosphate and the C-6 proR hydrogen from 5-enolpyruvylshikimate-3-phosphate (EPSP) to yield chorismate, which is the branch point compound that serves as the starting substrate for the three terminal pathways of aromatic amino acid biosynthesis. This reaction introduces a second double bond into the aromatic ring system. This Novosphingobium aromaticivorans (strain ATCC 700278 / DSM 12444 / CCUG 56034 / CIP 105152 / NBRC 16084 / F199) protein is Chorismate synthase.